Here is a 493-residue protein sequence, read N- to C-terminus: Adenylyltransferase and sulfurtransferase uba4 (493 aa).

ATP-binding positions include Gly99, Asp120, 127–131, Lys144, and 188–189; these read SNLHR and DN. Residues Cys237 and Cys240 each coordinate Zn(2+). The Glycyl thioester intermediate; for adenylyltransferase activity role is filled by Cys254. Zn(2+) is bound by residues Cys316 and Cys319. The Rhodanese domain occupies 376–491; the sequence is INKEPTIIDV…WREQIDPDWP (116 aa). Cys446 serves as the catalytic Cysteine persulfide intermediate; for sulfurtransferase activity.

In the N-terminal section; belongs to the HesA/MoeB/ThiF family. UBA4 subfamily. It depends on Zn(2+) as a cofactor.

It is found in the cytoplasm. The protein resides in the cytosol. The enzyme catalyses [molybdopterin-synthase sulfur-carrier protein]-C-terminal Gly-Gly + ATP + H(+) = [molybdopterin-synthase sulfur-carrier protein]-C-terminal Gly-Gly-AMP + diphosphate. The catalysed reaction is [molybdopterin-synthase sulfur-carrier protein]-C-terminal Gly-Gly-AMP + S-sulfanyl-L-cysteinyl-[cysteine desulfurase] + AH2 = [molybdopterin-synthase sulfur-carrier protein]-C-terminal-Gly-aminoethanethioate + L-cysteinyl-[cysteine desulfurase] + A + AMP + 2 H(+). It participates in tRNA modification; 5-methoxycarbonylmethyl-2-thiouridine-tRNA biosynthesis. Its pathway is cofactor biosynthesis; molybdopterin biosynthesis. Its function is as follows. Plays a central role in 2-thiolation of mcm(5)S(2)U at tRNA wobble positions of cytosolic tRNA(Lys), tRNA(Glu) and tRNA(Gln). Also essential during biosynthesis of the molybdenum cofactor. Acts by mediating the C-terminal thiocarboxylation of sulfur carriers urm1 and mocs2a. Its N-terminus first activates urm1 and mocs2a as acyl-adenylates (-COAMP), then the persulfide sulfur on the catalytic cysteine is transferred to urm1 and mocs2a to form thiocarboxylation (-COSH) of their C-terminus. The reaction probably involves hydrogen sulfide that is generated from the persulfide intermediate and that acts as a nucleophile towards urm1 and mocs2a. Subsequently, a transient disulfide bond is formed. Does not use thiosulfate as sulfur donor; nfs1 probably acting as a sulfur donor for thiocarboxylation reactions. This chain is Adenylyltransferase and sulfurtransferase uba4, found in Aspergillus fumigatus (strain ATCC MYA-4609 / CBS 101355 / FGSC A1100 / Af293) (Neosartorya fumigata).